Here is a 236-residue protein sequence, read N- to C-terminus: Outer membrane protein P.III (236 aa).

An N-terminal signal peptide occupies residues 1-22 (MTKQLKLSALFVALLASGTAVA). 4 repeat units span residues 69–70 (VP), 71–72 (EP), 73–74 (EP), and 75–76 (AP). Residues 69 to 76 (VPEPEPAP) form a 4 X 2 AA tandem repeats of X-P region. One can recognise an OmpA-like domain in the interval 86 to 223 (YVDETISLSA…RVDVKIRSIV (138 aa)). A disulfide bond links Cys-185 and Cys-208.

This sequence belongs to the outer membrane OOP (TC 1.B.6) superfamily.

Its subcellular location is the cell outer membrane. This chain is Outer membrane protein P.III, found in Neisseria gonorrhoeae.